The sequence spans 441 residues: uncharacterized protein (441 aa).

Positions 121–143 are enriched in low complexity; sequence TLSPSIVSEQQQQQQQQQQQQQQ. Disordered regions lie at residues 121–146 and 371–392; these read TLSP…QAIS and SDAD…TAPN. Polar residues predominate over residues 382–391; it reads PTSAPSTTAP.

This is an uncharacterized protein from Dictyostelium discoideum (Social amoeba).